The chain runs to 140 residues: uncharacterized protein (140 aa).

The protein belongs to the MG439/MG440 family.

This is an uncharacterized protein from Mycoplasma pneumoniae (strain ATCC 29342 / M129 / Subtype 1) (Mycoplasmoides pneumoniae).